The following is a 149-amino-acid chain: Large ribosomal subunit protein bL9 (149 aa).

It belongs to the bacterial ribosomal protein bL9 family.

In terms of biological role, binds to the 23S rRNA. In Xylella fastidiosa (strain 9a5c), this protein is Large ribosomal subunit protein bL9.